The primary structure comprises 94 residues: Co-chaperonin GroES (94 aa).

This sequence belongs to the GroES chaperonin family. As to quaternary structure, heptamer of 7 subunits arranged in a ring. Interacts with the chaperonin GroEL.

It is found in the cytoplasm. In terms of biological role, together with the chaperonin GroEL, plays an essential role in assisting protein folding. The GroEL-GroES system forms a nano-cage that allows encapsulation of the non-native substrate proteins and provides a physical environment optimized to promote and accelerate protein folding. GroES binds to the apical surface of the GroEL ring, thereby capping the opening of the GroEL channel. The sequence is that of Co-chaperonin GroES from Exiguobacterium sp. (strain ATCC BAA-1283 / AT1b).